The following is a 221-amino-acid chain: Endonuclease V (221 aa).

Mg(2+) contacts are provided by Asp-43 and Asp-111.

This sequence belongs to the endonuclease V family. Requires Mg(2+) as cofactor.

It localises to the cytoplasm. The catalysed reaction is Endonucleolytic cleavage at apurinic or apyrimidinic sites to products with a 5'-phosphate.. Functionally, DNA repair enzyme involved in the repair of deaminated bases. Selectively cleaves double-stranded DNA at the second phosphodiester bond 3' to a deoxyinosine leaving behind the intact lesion on the nicked DNA. This chain is Endonuclease V, found in Azotobacter vinelandii (strain DJ / ATCC BAA-1303).